Here is a 356-residue protein sequence, read N- to C-terminus: Peptide chain release factor 1 (356 aa).

An N5-methylglutamine modification is found at Gln-233.

This sequence belongs to the prokaryotic/mitochondrial release factor family. Methylated by PrmC. Methylation increases the termination efficiency of RF1.

It localises to the cytoplasm. Peptide chain release factor 1 directs the termination of translation in response to the peptide chain termination codons UAG and UAA. This chain is Peptide chain release factor 1, found in Endomicrobium trichonymphae.